Here is a 407-residue protein sequence, read N- to C-terminus: Peptidase T (407 aa).

Histidine 78 is a binding site for Zn(2+). Aspartate 80 is a catalytic residue. Aspartate 139 is a Zn(2+) binding site. Glutamate 173 (proton acceptor) is an active-site residue. Positions 174, 196, and 378 each coordinate Zn(2+).

Belongs to the peptidase M20B family. Requires Zn(2+) as cofactor.

Its subcellular location is the cytoplasm. The enzyme catalyses Release of the N-terminal residue from a tripeptide.. Its function is as follows. Cleaves the N-terminal amino acid of tripeptides. This chain is Peptidase T, found in Shewanella pealeana (strain ATCC 700345 / ANG-SQ1).